Consider the following 22-residue polypeptide: Melittin-like peptide (22 aa).

Position 22 is a glutamine amide (Gln-22).

Expressed by the skin dorsal glands.

Its subcellular location is the secreted. The sequence is that of Melittin-like peptide from Rana temporaria (European common frog).